The following is a 249-amino-acid chain: tRNA pseudouridine synthase A (249 aa).

D52 (nucleophile) is an active-site residue. Y110 is a substrate binding site.

This sequence belongs to the tRNA pseudouridine synthase TruA family. In terms of assembly, homodimer.

It catalyses the reaction uridine(38/39/40) in tRNA = pseudouridine(38/39/40) in tRNA. Formation of pseudouridine at positions 38, 39 and 40 in the anticodon stem and loop of transfer RNAs. The polypeptide is tRNA pseudouridine synthase A (Azobacteroides pseudotrichonymphae genomovar. CFP2).